The following is a 156-amino-acid chain: Small ribosomal subunit protein uS7 (156 aa).

It belongs to the universal ribosomal protein uS7 family. Part of the 30S ribosomal subunit. Contacts proteins S9 and S11.

One of the primary rRNA binding proteins, it binds directly to 16S rRNA where it nucleates assembly of the head domain of the 30S subunit. Is located at the subunit interface close to the decoding center, probably blocks exit of the E-site tRNA. The protein is Small ribosomal subunit protein uS7 of Paramagnetospirillum magneticum (strain ATCC 700264 / AMB-1) (Magnetospirillum magneticum).